The following is a 219-amino-acid chain: MSADKVTLADLPLRDNLRGKSPYGAPQLQVPVRLNTNENPHPPSKALVDDVAASVREAAAELHRYPDRDAVALRTDLAAYLTAATGVRLGVENLWAANGSNEILQQLLQAFGGPGRTAIGFVPSYSMHPIISDGTQTEWLQASRAEDFGLDIDVAVSAVTERKPDVVFVTSPNNPSGQSVPLDDLRRVLDAMQGGILIVDEAYGEFSSQPSAVALLDDY.

This sequence belongs to the class-II pyridoxal-phosphate-dependent aminotransferase family. Histidinol-phosphate aminotransferase subfamily. As to quaternary structure, homodimer. Requires pyridoxal 5'-phosphate as cofactor.

The catalysed reaction is L-histidinol phosphate + 2-oxoglutarate = 3-(imidazol-4-yl)-2-oxopropyl phosphate + L-glutamate. Its pathway is amino-acid biosynthesis; L-histidine biosynthesis; L-histidine from 5-phospho-alpha-D-ribose 1-diphosphate: step 7/9. The polypeptide is Histidinol-phosphate aminotransferase (hisC) (Mycolicibacterium smegmatis (Mycobacterium smegmatis)).